A 67-amino-acid chain; its full sequence is DNA-directed RNA polymerase subunit omega (67 aa).

Belongs to the RNA polymerase subunit omega family. As to quaternary structure, the RNAP catalytic core consists of 2 alpha, 1 beta, 1 beta' and 1 omega subunit. When a sigma factor is associated with the core the holoenzyme is formed, which can initiate transcription.

It catalyses the reaction RNA(n) + a ribonucleoside 5'-triphosphate = RNA(n+1) + diphosphate. Functionally, promotes RNA polymerase assembly. Latches the N- and C-terminal regions of the beta' subunit thereby facilitating its interaction with the beta and alpha subunits. This Listeria welshimeri serovar 6b (strain ATCC 35897 / DSM 20650 / CCUG 15529 / CIP 8149 / NCTC 11857 / SLCC 5334 / V8) protein is DNA-directed RNA polymerase subunit omega.